The sequence spans 255 residues: Thiazole synthase (255 aa).

The active-site Schiff-base intermediate with DXP is K96. 1-deoxy-D-xylulose 5-phosphate-binding positions include G157, 183–184 (AG), and 205–206 (NT).

Belongs to the ThiG family. Homotetramer. Forms heterodimers with either ThiH or ThiS.

It is found in the cytoplasm. The enzyme catalyses [ThiS sulfur-carrier protein]-C-terminal-Gly-aminoethanethioate + 2-iminoacetate + 1-deoxy-D-xylulose 5-phosphate = [ThiS sulfur-carrier protein]-C-terminal Gly-Gly + 2-[(2R,5Z)-2-carboxy-4-methylthiazol-5(2H)-ylidene]ethyl phosphate + 2 H2O + H(+). The protein operates within cofactor biosynthesis; thiamine diphosphate biosynthesis. Functionally, catalyzes the rearrangement of 1-deoxy-D-xylulose 5-phosphate (DXP) to produce the thiazole phosphate moiety of thiamine. Sulfur is provided by the thiocarboxylate moiety of the carrier protein ThiS. In vitro, sulfur can be provided by H(2)S. The polypeptide is Thiazole synthase (Heliobacterium modesticaldum (strain ATCC 51547 / Ice1)).